Reading from the N-terminus, the 412-residue chain is Proteasome-activating nucleotidase (412 aa).

A coiled-coil region spans residues 18–72 (YRYLVDRVAGMESQNQELKEQIRQLESDKRYIETQKIRYEREVRKLKSEIEHLKT). ATP-binding positions include 197-202 (GTGKTL) and histidine 336. The segment at 410–412 (MFA) is docks into pockets in the proteasome alpha-ring to cause gate opening.

It belongs to the AAA ATPase family. As to quaternary structure, homohexamer. The hexameric complex has a two-ring architecture resembling a top hat that caps the 20S proteasome core at one or both ends. Upon ATP-binding, the C-terminus of PAN interacts with the alpha-rings of the proteasome core by binding to the intersubunit pockets.

Its subcellular location is the cytoplasm. Its function is as follows. ATPase which is responsible for recognizing, binding, unfolding and translocation of substrate proteins into the archaeal 20S proteasome core particle. Is essential for opening the gate of the 20S proteasome via an interaction with its C-terminus, thereby allowing substrate entry and access to the site of proteolysis. Thus, the C-termini of the proteasomal ATPase function like a 'key in a lock' to induce gate opening and therefore regulate proteolysis. Unfolding activity requires energy from ATP hydrolysis, whereas ATP binding alone promotes ATPase-20S proteasome association which triggers gate opening, and supports translocation of unfolded substrates. This is Proteasome-activating nucleotidase from Methanospirillum hungatei JF-1 (strain ATCC 27890 / DSM 864 / NBRC 100397 / JF-1).